Consider the following 90-residue polypeptide: UPF0335 protein bsl7135 (90 aa).

This sequence belongs to the UPF0335 family.

The chain is UPF0335 protein bsl7135 from Bradyrhizobium diazoefficiens (strain JCM 10833 / BCRC 13528 / IAM 13628 / NBRC 14792 / USDA 110).